We begin with the raw amino-acid sequence, 211 residues long: Large ribosomal subunit protein eL13 (211 aa).

Lysine 16 is modified (N6-acetyllysine). Serine 52 and serine 77 each carry phosphoserine. Glycyl lysine isopeptide (Lys-Gly) (interchain with G-Cter in SUMO2) cross-links involve residues lysine 123 and lysine 145. Lysine 174 is covalently cross-linked (Glycyl lysine isopeptide (Lys-Gly) (interchain with G-Cter in SUMO1); alternate). Residues lysine 174 and lysine 177 each participate in a glycyl lysine isopeptide (Lys-Gly) (interchain with G-Cter in SUMO2); alternate cross-link. The residue at position 177 (lysine 177) is an N6-acetyllysine; alternate.

This sequence belongs to the eukaryotic ribosomal protein eL13 family. Component of the 60S large ribosomal subunit (LSU).

The protein localises to the cytoplasm. Component of the ribosome, a large ribonucleoprotein complex responsible for the synthesis of proteins in the cell. The small ribosomal subunit (SSU) binds messenger RNAs (mRNAs) and translates the encoded message by selecting cognate aminoacyl-transfer RNA (tRNA) molecules. The large subunit (LSU) contains the ribosomal catalytic site termed the peptidyl transferase center (PTC), which catalyzes the formation of peptide bonds, thereby polymerizing the amino acids delivered by tRNAs into a polypeptide chain. The nascent polypeptides leave the ribosome through a tunnel in the LSU and interact with protein factors that function in enzymatic processing, targeting, and the membrane insertion of nascent chains at the exit of the ribosomal tunnel. As part of the LSU, it is probably required for its formation and the maturation of rRNAs. Plays a role in bone development. The chain is Large ribosomal subunit protein eL13 (RPL13) from Bos taurus (Bovine).